A 518-amino-acid polypeptide reads, in one-letter code: Glutamate--cysteine ligase (518 aa).

This sequence belongs to the glutamate--cysteine ligase type 1 family. Type 1 subfamily.

The enzyme catalyses L-cysteine + L-glutamate + ATP = gamma-L-glutamyl-L-cysteine + ADP + phosphate + H(+). Its pathway is sulfur metabolism; glutathione biosynthesis; glutathione from L-cysteine and L-glutamate: step 1/2. The polypeptide is Glutamate--cysteine ligase (Salmonella agona (strain SL483)).